Reading from the N-terminus, the 176-residue chain is ATP-dependent protease subunit HslV (176 aa).

Residue T2 is part of the active site. 3 residues coordinate Na(+): G157, C160, and T163.

Belongs to the peptidase T1B family. HslV subfamily. A double ring-shaped homohexamer of HslV is capped on each side by a ring-shaped HslU homohexamer. The assembly of the HslU/HslV complex is dependent on binding of ATP.

It localises to the cytoplasm. The enzyme catalyses ATP-dependent cleavage of peptide bonds with broad specificity.. Allosterically activated by HslU binding. Functionally, protease subunit of a proteasome-like degradation complex believed to be a general protein degrading machinery. This is ATP-dependent protease subunit HslV from Enterobacter sp. (strain 638).